The following is a 163-amino-acid chain: ATP synthase subunit b' (163 aa).

Residues 28-45 (LMAIQFLLLALILNATLY) traverse the membrane as a helical segment.

It belongs to the ATPase B chain family. F-type ATPases have 2 components, F(1) - the catalytic core - and F(0) - the membrane proton channel. F(1) has five subunits: alpha(3), beta(3), gamma(1), delta(1), epsilon(1). F(0) has four main subunits: a(1), b(1), b'(1) and c(10-14). The alpha and beta chains form an alternating ring which encloses part of the gamma chain. F(1) is attached to F(0) by a central stalk formed by the gamma and epsilon chains, while a peripheral stalk is formed by the delta, b and b' chains.

Its subcellular location is the cellular thylakoid membrane. F(1)F(0) ATP synthase produces ATP from ADP in the presence of a proton or sodium gradient. F-type ATPases consist of two structural domains, F(1) containing the extramembraneous catalytic core and F(0) containing the membrane proton channel, linked together by a central stalk and a peripheral stalk. During catalysis, ATP synthesis in the catalytic domain of F(1) is coupled via a rotary mechanism of the central stalk subunits to proton translocation. Its function is as follows. Component of the F(0) channel, it forms part of the peripheral stalk, linking F(1) to F(0). The b'-subunit is a diverged and duplicated form of b found in plants and photosynthetic bacteria. The sequence is that of ATP synthase subunit b' from Nostoc sp. (strain PCC 7120 / SAG 25.82 / UTEX 2576).